Here is a 209-residue protein sequence, read N- to C-terminus: Ribosomal RNA large subunit methyltransferase E (209 aa).

Residues Gly-63, Trp-65, Asp-83, Asp-99, and Asp-124 each coordinate S-adenosyl-L-methionine. Lys-164 (proton acceptor) is an active-site residue. Positions 191 to 209 (EASRGRSREVYIVAMGYMG) constitute a TRAM domain.

The protein belongs to the class I-like SAM-binding methyltransferase superfamily. RNA methyltransferase RlmE family.

Its subcellular location is the cytoplasm. It carries out the reaction uridine(2552) in 23S rRNA + S-adenosyl-L-methionine = 2'-O-methyluridine(2552) in 23S rRNA + S-adenosyl-L-homocysteine + H(+). In terms of biological role, specifically methylates the uridine in position 2552 of 23S rRNA at the 2'-O position of the ribose in the fully assembled 50S ribosomal subunit. The chain is Ribosomal RNA large subunit methyltransferase E from Histophilus somni (strain 129Pt) (Haemophilus somnus).